A 114-amino-acid chain; its full sequence is NADH dehydrogenase [ubiquinone] 1 subunit C2, isoform 2 (114 aa).

The chain crosses the membrane as a helical span at residues 56–75 (GLHRQLLYITAFFFAGYYLV).

Belongs to the complex I NDUFC2 subunit family. As to quaternary structure, complex I is composed of 45 different subunits.

It localises to the mitochondrion inner membrane. Its function is as follows. Accessory subunit of the mitochondrial membrane respiratory chain NADH dehydrogenase (Complex I), that is believed not to be involved in catalysis. Complex I functions in the transfer of electrons from NADH to the respiratory chain. The immediate electron acceptor for the enzyme is believed to be ubiquinone. The protein is NADH dehydrogenase [ubiquinone] 1 subunit C2, isoform 2 (NDUFC2-KCTD14) of Homo sapiens (Human).